The following is a 511-amino-acid chain: Lysine--tRNA ligase (511 aa).

Residues glutamate 421 and glutamate 428 each coordinate Mg(2+).

This sequence belongs to the class-II aminoacyl-tRNA synthetase family. In terms of assembly, homodimer. Mg(2+) serves as cofactor.

Its subcellular location is the cytoplasm. It catalyses the reaction tRNA(Lys) + L-lysine + ATP = L-lysyl-tRNA(Lys) + AMP + diphosphate. The polypeptide is Lysine--tRNA ligase (Janthinobacterium sp. (strain Marseille) (Minibacterium massiliensis)).